A 285-amino-acid chain; its full sequence is Protease HtpX homolog (285 aa).

Transmembrane regions (helical) follow at residues 7 to 27 and 30 to 50; these read TAML…MIGG and GMTI…WFSD. Zn(2+) is bound at residue H131. Residue E132 is part of the active site. H135 is a binding site for Zn(2+). A run of 2 helical transmembrane segments spans residues 146 to 166 and 177 to 197; these read ITAT…FFGG and IAGI…QMAI. A Zn(2+)-binding site is contributed by E202.

It belongs to the peptidase M48B family. Zn(2+) is required as a cofactor.

The protein resides in the cell inner membrane. The chain is Protease HtpX homolog from Burkholderia lata (strain ATCC 17760 / DSM 23089 / LMG 22485 / NCIMB 9086 / R18194 / 383).